The following is a 188-amino-acid chain: Probable nicotinate-nucleotide adenylyltransferase (188 aa).

It belongs to the NadD family.

The catalysed reaction is nicotinate beta-D-ribonucleotide + ATP + H(+) = deamido-NAD(+) + diphosphate. It functions in the pathway cofactor biosynthesis; NAD(+) biosynthesis; deamido-NAD(+) from nicotinate D-ribonucleotide: step 1/1. Catalyzes the reversible adenylation of nicotinate mononucleotide (NaMN) to nicotinic acid adenine dinucleotide (NaAD). This is Probable nicotinate-nucleotide adenylyltransferase from Listeria monocytogenes serotype 4b (strain F2365).